A 324-amino-acid polypeptide reads, in one-letter code: Concanavalin B (324 aa).

The first 25 residues, 1-25, serve as a signal peptide directing secretion; sequence MGCERKALILMVVIWIMSFWTLSLA. Residues 30–311 form the GH18 domain; the sequence is TEIAVYWGQR…TNIIRYLNAT (282 aa). N-linked (GlcNAc...) asparagine glycosylation is present at Asn-309.

It belongs to the glycosyl hydrolase 18 family.

In terms of biological role, may act as a carbohydrate-binding protein. The polypeptide is Concanavalin B (Canavalia ensiformis (Jack bean)).